The following is an 880-amino-acid chain: Leucine-rich repeat-containing protein 66 (880 aa).

Residues 4-24 (LYFRVITIVIGLYFTGIMTNA) form a helical membrane-spanning segment. Asn45 is a glycosylation site (N-linked (GlcNAc...) asparagine). LRR repeat units lie at residues 86–107 (KIKH…PFAY), 110–130 (ALEV…DLLS), 149–171 (LLKV…WKLK), 172–193 (SLQS…DFHN), 196–217 (QLEN…AFKD), and 220–241 (KLQV…MIIA). N-linked (GlcNAc...) asparagine glycosylation is present at Asn115. The segment at 319–368 (SKAERPQGGRHTGISTLGKKAKAGSGLRKKQRRLPRSVRSTRDVQAAGKK) is disordered. The span at 337 to 354 (KKAKAGSGLRKKQRRLPR) shows a compositional bias: basic residues. The chain crosses the membrane as a helical span at residues 376–396 (ALAVCLSVFITFLVAFSLGAF). Disordered regions lie at residues 463-504 (PHPH…NDGA) and 679-746 (VTPA…SKDN). The span at 483–493 (GSSQSPGQCGD) shows a compositional bias: polar residues. Residues 697–707 (CELESDCDSDE) show a composition bias toward acidic residues. Positions 709 to 720 (SLFTLSSISSES) are enriched in low complexity. Phosphoserine is present on Ser723. A compositionally biased stretch (polar residues) spans 737-746 (DESSGASKDN). N-linked (GlcNAc...) asparagine glycosylation is present at Asn746. At Ser752 the chain carries Phosphoserine. Residue Asn756 is glycosylated (N-linked (GlcNAc...) asparagine). Disordered regions lie at residues 764-816 (GKCK…PLGD) and 855-880 (TPPC…DILK). Basic and acidic residues-rich tracts occupy residues 788–800 (THLE…DRSE) and 865–880 (DPDK…DILK).

The protein localises to the membrane. In Homo sapiens (Human), this protein is Leucine-rich repeat-containing protein 66 (LRRC66).